Here is a 343-residue protein sequence, read N- to C-terminus: Probable magnesium transporter NIPA4 (343 aa).

The Extracellular portion of the chain corresponds to 1–18 (MAESSGSWRDSYKGMSSD). The helical transmembrane segment at 19-39 (NIKGLVLALSSSLFIGASFIV) threads the bilayer. The Cytoplasmic portion of the chain corresponds to 40–66 (KKKGLKKAASTGTRAGVGGYSYLYEPL). The helical transmembrane segment at 67–87 (WWIGMTTMLLGEIANFAAYAF) threads the bilayer. The Extracellular segment spans residues 88-90 (APA). The chain crosses the membrane as a helical span at residues 91–111 (ILVTPLGAVSIIISAVLAHII). Over 112-115 (LREK) the chain is Cytoplasmic. The chain crosses the membrane as a helical span at residues 116-136 (LHIFGILGCALCVVGSTTIVL). At 137 to 157 (HAPQEREIDSVIEVWNLATEP) the chain is on the extracellular side. The helical transmembrane segment at 158 to 178 (AFMFYASLVIGAAVFLIIRFV) threads the bilayer. Topologically, residues 179–189 (PQYGQTNVMVY) are cytoplasmic. Residues 190–210 (IGICSLVGSLSVMSVKALGIA) form a helical membrane-spanning segment. The Extracellular segment spans residues 211–220 (LKLTFSGTNQ). Residues 221–241 (LFYPQTWIFTLVVLTCVVTQL) form a helical membrane-spanning segment. Residues 242 to 254 (NYLNKALDTFNTA) are Cytoplasmic-facing. Residues 255-275 (IVSPIYYVMFTSLTILASVIM) form a helical membrane-spanning segment. Residues 276 to 283 (FKDWDRQN) are Extracellular-facing. The chain crosses the membrane as a helical span at residues 284 to 304 (GTQIVTEICGFVTILSGTFLL). Residues 305–343 (HRTKDMVEGSSVILPLRISKHINEEEGIPLRRQESLRSP) lie on the Cytoplasmic side of the membrane.

Belongs to the NIPA (TC 2.A.7) family. Homodimer.

It localises to the cell membrane. It is found in the early endosome. Its function is as follows. Acts as a Mg(2+) transporter. Can also transport other divalent cations such as Fe(2+), Sr(2+), Ba(2+), Mn(2+) and Co(2+) but to a much less extent than Mg(2+). The sequence is that of Probable magnesium transporter NIPA4 from Arabidopsis thaliana (Mouse-ear cress).